Here is a 301-residue protein sequence, read N- to C-terminus: tRNA pseudouridine synthase B (301 aa).

The active-site Nucleophile is the D48.

Belongs to the pseudouridine synthase TruB family. Type 1 subfamily.

The enzyme catalyses uridine(55) in tRNA = pseudouridine(55) in tRNA. Its function is as follows. Responsible for synthesis of pseudouridine from uracil-55 in the psi GC loop of transfer RNAs. This chain is tRNA pseudouridine synthase B, found in Mycobacterium ulcerans (strain Agy99).